Consider the following 423-residue polypeptide: SH2 domain-containing protein 5 (423 aa).

Residues 28–146 (AQYVGLLPCG…LLCRSFQLAY (119 aa)) enclose the PID domain. Residues 296–392 (WAFAGISRPC…LDMGRLNPTY (97 aa)) form the SH2 domain. The tract at residues 394–423 (EQDCGPLGRPPRTLRPLSHAKSEAELQGLG) is disordered. A compositionally biased stretch (low complexity) spans 398–410 (GPLGRPPRTLRPL).

As to quaternary structure, interacts with BCR.

It is found in the postsynaptic density. Functionally, may be involved in synaptic plasticity regulation through the control of Rac-GTP levels. The polypeptide is SH2 domain-containing protein 5 (Pongo abelii (Sumatran orangutan)).